The sequence spans 1782 residues: Atrochrysone carboxylic acid synthase (1782 aa).

The interval 41–270 (HTYTKDRRYP…ALPVYGGLCH (230 aa)) is N-terminal acylcarrier protein transacylase domain (SAT). Positions 407-841 (QSKIAIVGMS…GGNSTLAIEE (435 aa)) constitute a Ketosynthase family 3 (KS3) domain. Catalysis depends on for beta-ketoacyl synthase activity residues Cys580, His716, and His759. Positions 946-1266 (FAFTGQGSSY…LGILHCAGVP (321 aa)) are malonyl-CoA:ACP transacylase (MAT) domain. Residues 1331 to 1648 (TSTVQQIIHE…RILLNRFFSA (318 aa)) are product template (PT) domain. The tract at residues 1335 to 1468 (QQIIHEQYDG…ATVYYEEASD (134 aa)) is N-terminal hotdog fold. The PKS/mFAS DH domain occupies 1335-1643 (QQIIHEQYDG…FRRYPRILLN (309 aa)). His1367 (proton acceptor; for dehydratase activity) is an active-site residue. The interval 1495–1643 (VANRFTRRMA…FRRYPRILLN (149 aa)) is C-terminal hotdog fold. Asp1554 (proton donor; for dehydratase activity) is an active-site residue. Residues 1653–1703 (ARKSTPATSAPAPAPPAGSEALQPKAAPASTPAAPASADAPTTNGVKAAAE) form a disordered region. A compositionally biased stretch (low complexity) spans 1678–1695 (AAPASTPAAPASADAPTT). Residues 1704-1781 (PDANSTAAKA…DLKSWLLEYY (78 aa)) form the Carrier domain. Ser1741 carries the O-(pantetheine 4'-phosphoryl)serine modification.

Specifically expressed in conidia.

The enzyme catalyses holo-[ACP] + 8 malonyl-CoA + 8 H(+) = atrochrysone carboxyl-[ACP] + 8 CO2 + 8 CoA + 2 H2O. Its pathway is secondary metabolite biosynthesis. In terms of biological role, non-reducing polyketide synthase; part of the gene cluster that mediates the biosynthesis of trypacidin, a mycotoxin with antiprotozoal activity and that plays a role in the infection process. The pathway begins with the synthesis of atrochrysone thioester by the polyketide synthase (PKS) tpcC. The atrochrysone carboxyl ACP thioesterase tpcB then breaks the thioester bond and releases the atrochrysone carboxylic acid from tpcC. The decarboxylase tpcK converts atrochrysone carboxylic acid to atrochrysone which is further reduced into emodin anthrone. The next step is performed by the emodin anthrone oxygenase tpcL that catalyzes the oxidation of emodin anthrone to emodin. Emodin O-methyltransferase encoded by tpcA catalyzes methylation of the 8-hydroxy group of emodin to form questin. Ring cleavage of questin by questin oxidase tpcI leads to desmethylsulochrin via several intermediates including questin epoxide. Another methylation step catalyzed by tpcM leads to the formation of sulochrin which is further converted to monomethylsulfochrin by tpcH. Finally, the tpcJ catalyzes the conversion of monomethylsulfochrin to trypacidin. Trypacidin is toxic for human pulmonary and bronchial epithelial cells by initiating the intracellular formation of nitric oxide (NO) and hydrogen peroxide (H(2)O(2)), thus triggering host necrotic cell death. The trypacidin pathway is also able to produce endocrocin via a distinct route from the endocrocin Enc pathway. This Aspergillus fumigatus (strain ATCC MYA-4609 / CBS 101355 / FGSC A1100 / Af293) (Neosartorya fumigata) protein is Atrochrysone carboxylic acid synthase.